Here is a 487-residue protein sequence, read N- to C-terminus: 2-aminomuconic semialdehyde dehydrogenase (487 aa).

231–236 contacts NAD(+); it reads GSQPTA. The Proton acceptor role is filled by Glu253. Cys287 serves as the catalytic Nucleophile.

This sequence belongs to the aldehyde dehydrogenase family.

The protein resides in the cytoplasm. The catalysed reaction is 2-aminomuconate 6-semialdehyde + NAD(+) + H2O = (2Z,4E)-2-aminomuconate + NADH + 2 H(+). It functions in the pathway amino-acid degradation; L-kynurenine degradation. Catalyzes the NAD-dependent oxidation of 2-aminomuconic semialdehyde of the kynurenine metabolic pathway in L-tryptophan degradation. The sequence is that of 2-aminomuconic semialdehyde dehydrogenase (ALDH8A1) from Bos taurus (Bovine).